The chain runs to 1593 residues: Autotransporter CRAC (1593 aa).

The signal sequence occupies residues 1–54 (MNKVYNTVWNESTGMWVVTSELTRKGGRRPRQIRRTALAGLIAGLLLPSAPALA). The span at 65 to 85 (GATSSSMSLNAGDTATDTTIN) shows a compositional bias: polar residues. Disordered regions lie at residues 65-100 (GATS…SATS) and 1267-1286 (KADS…PVPP). The segment covering 86-97 (SGGSQRVSSGGS) has biased composition (low complexity). Residues 1269 to 1280 (DSSQPGTDNPGT) are compositionally biased toward polar residues. One can recognise an Autotransporter domain in the interval 1325-1593 (NTRSPGGVWG…TGSVGFRINF (269 aa)).

Post-translationally, glycosylated by heptosyltransferas BAHTCr. Glycosylation is required for adhesion to mammalian cells and colonization of the mouse host gastrointestinal tract.

The protein resides in the cell outer membrane. In terms of biological role, autotransporter required for the colonization of the mouse host gastrointestinal tract, possibly by mediating bacteria adhesion to host cells. In Citrobacter rodentium (strain ICC168) (Citrobacter freundii biotype 4280), this protein is Autotransporter CRAC.